We begin with the raw amino-acid sequence, 347 residues long: Haptoglobin (347 aa).

A signal peptide spans 1–18; that stretch reads MSALGAVIALLLWGQLFA. Positions 31–88 constitute a Sushi domain; that stretch reads DGCPKPPEIANGYVEHLVRYQCKKYYRLRTEGDGVYTLNNEKQWTNKAVGDKLPECEA. Intrachain disulfides connect Cys52–Cys86, Cys90–Cys207, Cys250–Cys281, and Cys292–Cys322. The 243-residue stretch at 103–345 folds into the Peptidase S1 domain; it reads ILGGHLDAKG…IQDWVQKTIA (243 aa). 4 N-linked (GlcNAc...) asparagine glycosylation sites follow: Asn125, Asn148, Asn152, and Asn182. The interval 259–264 is interaction with CD163; that stretch reads VPEKKT.

It belongs to the peptidase S1 family. In terms of assembly, tetramer of two alpha and two beta chains; disulfide-linked. The hemoglobin/haptoglobin complex is composed of a haptoglobin dimer bound to two hemoglobin alpha-beta dimers. Interacts with CD163. Interacts with ERGIC3. In terms of tissue distribution, expressed by the liver and secreted in plasma.

It is found in the secreted. Functionally, as a result of hemolysis, hemoglobin is found to accumulate in the kidney and is secreted in the urine. Haptoglobin captures, and combines with free plasma hemoglobin to allow hepatic recycling of heme iron and to prevent kidney damage. Haptoglobin also acts as an antioxidant, has antibacterial activity and plays a role in modulating many aspects of the acute phase response. Hemoglobin/haptoglobin complexes are rapidly cleared by the macrophage CD163 scavenger receptor expressed on the surface of liver Kupfer cells through an endocytic lysosomal degradation pathway. This is Haptoglobin (HP) from Ateles geoffroyi (Black-handed spider monkey).